Here is a 307-residue protein sequence, read N- to C-terminus: Fructose-bisphosphate aldolase (307 aa).

Residue serine 49 participates in D-glyceraldehyde 3-phosphate binding. The Proton donor role is filled by aspartate 82. Residues histidine 83, aspartate 104, glutamate 134, and histidine 180 each coordinate Zn(2+). Residue glycine 181 participates in dihydroxyacetone phosphate binding. Histidine 210 contributes to the Zn(2+) binding site. Dihydroxyacetone phosphate contacts are provided by residues 211 to 213 (GAS) and 253 to 256 (NTDT).

The protein belongs to the class II fructose-bisphosphate aldolase family. As to quaternary structure, homodimer. Requires Zn(2+) as cofactor.

It catalyses the reaction beta-D-fructose 1,6-bisphosphate = D-glyceraldehyde 3-phosphate + dihydroxyacetone phosphate. The protein operates within carbohydrate degradation; glycolysis; D-glyceraldehyde 3-phosphate and glycerone phosphate from D-glucose: step 4/4. Functionally, catalyzes the aldol condensation of dihydroxyacetone phosphate (DHAP or glycerone-phosphate) with glyceraldehyde 3-phosphate (G3P) to form fructose 1,6-bisphosphate (FBP) in gluconeogenesis and the reverse reaction in glycolysis. This chain is Fructose-bisphosphate aldolase (fba), found in Helicobacter pylori (strain ATCC 700392 / 26695) (Campylobacter pylori).